A 123-amino-acid chain; its full sequence is Ribosome-binding factor A (123 aa).

This sequence belongs to the RbfA family. In terms of assembly, monomer. Binds 30S ribosomal subunits, but not 50S ribosomal subunits or 70S ribosomes.

It is found in the cytoplasm. Functionally, one of several proteins that assist in the late maturation steps of the functional core of the 30S ribosomal subunit. Associates with free 30S ribosomal subunits (but not with 30S subunits that are part of 70S ribosomes or polysomes). Required for efficient processing of 16S rRNA. May interact with the 5'-terminal helix region of 16S rRNA. This Lactobacillus johnsonii (strain CNCM I-12250 / La1 / NCC 533) protein is Ribosome-binding factor A.